The sequence spans 638 residues: DNA repair protein rhp41 (638 aa).

Belongs to the XPC family.

It localises to the nucleus. Its function is as follows. Has a role in the nucleotide excision repair (NER) pathway. Acts in both transcription-coupled repair (TCR) which removes damage from the transcribed strand of active genes and in global genome repair (GGR) which removes damage in untranscribed DNA. Involved in the repair of UV-induced damages where it is involved in the removal of cyclobutane pyrimidine dimers (CPDs). This chain is DNA repair protein rhp41 (rhp41), found in Schizosaccharomyces pombe (strain 972 / ATCC 24843) (Fission yeast).